A 132-amino-acid polypeptide reads, in one-letter code: Small ribosomal subunit protein uS8 (132 aa).

It belongs to the universal ribosomal protein uS8 family. Part of the 30S ribosomal subunit. Contacts proteins S5 and S12.

Its function is as follows. One of the primary rRNA binding proteins, it binds directly to 16S rRNA central domain where it helps coordinate assembly of the platform of the 30S subunit. This Leifsonia xyli subsp. xyli (strain CTCB07) protein is Small ribosomal subunit protein uS8.